A 280-amino-acid polypeptide reads, in one-letter code: MDDDLKSIASKYYIGGHISVSGGLHLAPERASIFGFRTFQFFSKNQMRWNSTPISEEEALRFISEVSSHSISSTMVHASYLINLASSSNELHQKSFNAFVEEIQRAERIDATFLTFHPGSNGNKDEGIRKIKEAIEKVETHKVKLLVENTAGQGNVIGSTIYEIGQIIDGFDSSVGVCIDTCHAWAAGYDITNKYDEFIDELDSAIGLDRIYAFHLNDAMKDLGSNIDRHELIGRGKIGEGLIKLISDVRLFGKPKIMETPYGEAKFEENLKYIRKKLGE.

Positions 77, 117, 148, 180, 183, 215, 228, 230, and 259 each coordinate Zn(2+).

The protein belongs to the AP endonuclease 2 family. The cofactor is Zn(2+).

The catalysed reaction is Endonucleolytic cleavage to 5'-phosphooligonucleotide end-products.. Functionally, endonuclease IV plays a role in DNA repair. It cleaves phosphodiester bonds at apurinic or apyrimidinic (AP) sites, generating a 3'-hydroxyl group and a 5'-terminal sugar phosphate. The sequence is that of Probable endonuclease 4 from Thermoplasma volcanium (strain ATCC 51530 / DSM 4299 / JCM 9571 / NBRC 15438 / GSS1).